The primary structure comprises 560 residues: Protein SINE1 (560 aa).

Gly-2 is modified (N-acetylglycine). The interval 7-287 is ARMADILLO-type fold; that stretch reads PILRQELANL…VRGAAYEAMM (281 aa). The KASH domain occupies 517–560; it reads KKKKKKMSYAKLVIAISFVVVALFATVILMVNQDDDVGYYTVPT. Residues 528–548 traverse the membrane as a helical segment; that stretch reads LVIAISFVVVALFATVILMVN. A Required for nuclear localization motif is present at residues 557-560; it reads TVPT.

In terms of assembly, interacts with SUN1 and SUN2. Binds to F-actin. As to expression, preferentially expressed in guards cells, but also detected in root cells.

It localises to the nucleus membrane. Its function is as follows. Plays a role in nucleus positioning in guard cells. In Arabidopsis thaliana (Mouse-ear cress), this protein is Protein SINE1.